The following is a 2320-amino-acid chain: Sperm-associated antigen 17 (2320 aa).

2 stretches are compositionally biased toward basic and acidic residues: residues 139–171 (DQQR…EKKV) and 199–210 (RRGEDDEAKSYI). Disordered regions lie at residues 139–211 (DQQR…SYID), 388–407 (IPEP…KAQY), 682–739 (AEQD…SMDQ), 894–928 (SASK…EKDK), 950–1001 (EERL…AKTL), 1084–1118 (KEKE…EKVK), 1191–1221 (QGKG…EKKN), 1334–1367 (SSPD…KSET), 1393–1416 (DIIP…TTTP), 1983–2028 (KEAS…YENV), and 2080–2101 (TKES…EEPD). Residues 703–720 (VTGSTSNSTKPWNSSNRQ) are compositionally biased toward polar residues. Residues 865-965 (EEAKYQEAKM…EKKAEKKGKD (101 aa)) are a coiled coil. 2 stretches are compositionally biased toward basic and acidic residues: residues 914-928 (ELSD…EKDK) and 950-999 (EERL…EPAK). The segment covering 1090 to 1103 (NSEEEEEEEEEKEE) has biased composition (acidic residues). Basic and acidic residues-rich tracts occupy residues 1104–1118 (VEEK…EKVK) and 1203–1221 (KHKD…EKKN). Polar residues-rich tracts occupy residues 2012–2028 (VNKS…YENV) and 2082–2094 (ESVS…NVTR).

In terms of assembly, interacts (via the C-terminus) with SPAG6; the interaction probably occurs on polymerized microtubules. Highly expressed in testis, round spermatids, testicular sperm, epididymal sperm and in condensing spermatids (at protein level). Expressed in organs that contain cilia-bearing cells including brain, oviduct, lung, and uterus. Expressed in articular cartilage and bone.

It localises to the cytoplasm. The protein resides in the cytoskeleton. Its subcellular location is the flagellum axoneme. The protein localises to the cytoplasmic vesicle. It is found in the secretory vesicle. It localises to the acrosome. The protein resides in the golgi apparatus. Component of the central pair apparatus of ciliary axonemes. Plays a critical role in the function and structure of motile cilia. May play a role in endochondral bone formation, most likely because of a function in primary cilia of chondrocytes and osteoblasts. Essential for normal spermatogenesis and male fertility. Required for normal manchette structure, transport of proteins along the manchette microtubules and formation of the sperm head and flagellum. Essential for sperm flagellum development and proper assembly of the respiratory motile cilia central pair apparatus, but not the brain ependymal cilia. The sequence is that of Sperm-associated antigen 17 (Spag17) from Mus musculus (Mouse).